We begin with the raw amino-acid sequence, 85 residues long: Teretoxin Tan9.6 (85 aa).

The N-terminal stretch at 1 to 21 (MMSKTGALLLTFMILVLFSMA) is a signal peptide. Positions 22–52 (AADALGERFEDHEQKIREQDAGVGLLSLMGR) are excised as a propeptide.

Contains 3 disulfide bonds. In terms of tissue distribution, expressed by the venom duct.

It is found in the secreted. The sequence is that of Teretoxin Tan9.6 from Terebra anilis (Auger snail).